Reading from the N-terminus, the 546-residue chain is Chaperonin GroEL (546 aa).

Residues 30–33 (TLGP), lysine 51, 87–91 (DGTTT), glycine 415, 479–481 (NAA), and aspartate 495 contribute to the ATP site.

The protein belongs to the chaperonin (HSP60) family. In terms of assembly, forms a cylinder of 14 subunits composed of two heptameric rings stacked back-to-back. Interacts with the co-chaperonin GroES.

The protein resides in the cytoplasm. It catalyses the reaction ATP + H2O + a folded polypeptide = ADP + phosphate + an unfolded polypeptide.. Functionally, together with its co-chaperonin GroES, plays an essential role in assisting protein folding. The GroEL-GroES system forms a nano-cage that allows encapsulation of the non-native substrate proteins and provides a physical environment optimized to promote and accelerate protein folding. The sequence is that of Chaperonin GroEL from Pseudomonas entomophila (strain L48).